The sequence spans 439 residues: uncharacterized protein (439 aa).

The region spanning 116 to 439 (GKAASYRAAQ…PMRTPLQEAE (324 aa)) is the YcaO domain.

This is an uncharacterized protein from Mycobacterium tuberculosis (strain CDC 1551 / Oshkosh).